Consider the following 452-residue polypeptide: Sodium-coupled neutral amino acid transporter 7 (452 aa).

The next 11 helical transmembrane spans lie at 46–66, 74–94, 120–140, 168–188, 195–215, 234–256, 272–292, 309–329, 361–381, 385–405, and 419–439; these read AVFIVVNAALGAGLLNFPAAF, AAISLQLVLLLFIISGLVILA, LCEVLIAVYTFGTCIAFFIII, FTISVTGVLLILPLSLPREIS, FLSVLGTCYVTVVVVVRCIWP, VFNAVPTICFGYQCHVSSVPVYG, IAMFIALCVYTGTGVCGFLLF, IAVAVARAFIILCVLTSYPIL, VLQTVIWFLLTLLLALFIPDI, ISLIGGLAACFIFIFPGLCLI, and SWWALLSYGVIMVTIGTFIFG.

This sequence belongs to the amino acid/polyamine transporter 2 family.

Its subcellular location is the lysosome membrane. The protein localises to the cell projection. The protein resides in the axon. It carries out the reaction L-asparagine(in) + Na(+)(in) = L-asparagine(out) + Na(+)(out). The enzyme catalyses L-glutamine(in) + Na(+)(in) = L-glutamine(out) + Na(+)(out). Functionally, symporter that selectively cotransports sodium ions and amino acids, such as L-glutamine and L-asparagine from the lysosome into the cytoplasm and may participates in mTORC1 activation. The transport activity requires an acidic lysosomal lumen. The polypeptide is Sodium-coupled neutral amino acid transporter 7 (Xenopus laevis (African clawed frog)).